Reading from the N-terminus, the 819-residue chain is FYN-binding protein 1 (819 aa).

The segment covering 1–45 has biased composition (polar residues); that stretch reads MAKFNTGSNPTEEAATSSRPFKVAGQSSPSGIQSRKNLFDNQGNA. The segment at 1–490 is disordered; it reads MAKFNTGSNP…REKKEQELKK (490 aa). Position 3 is an N6-acetyllysine (Lys-3). Ser-28 and Ser-46 each carry phosphoserine. Residues 69 to 79 are compositionally biased toward basic and acidic residues; that stretch reads TYEEKPEKEPK. Residues 150–160 are compositionally biased toward pro residues; the sequence is GPKPGPAPPVP. Ser-222 carries the phosphoserine modification. 2 stretches are compositionally biased toward basic and acidic residues: residues 237–248 and 273–285; these read PPKEDPEDKDHG and NFEE…KTDL. Residue Ser-318 is modified to Phosphoserine. 2 stretches are compositionally biased toward pro residues: residues 342–351 and 380–412; these read GPPPPKPNRP and LPPP…PRNI. The segment covering 439–453 has biased composition (acidic residues); it reads LEEEQESEGETYEDI. Phosphoserine is present on Ser-445. Residues 448-495 adopt a coiled-coil conformation; it reads ETYEDIDSSKERDKKREKEEKKRLELERKEQKEREKKEQELKKKFKLT. The segment covering 454–489 has biased composition (basic and acidic residues); it reads DSSKERDKKREKEEKKRLELERKEQKEREKKEQELK. The Nuclear localization signal signature appears at 479-493; it reads KEREKKEQELKKKFK. The SH3 1 domain occupies 499-560; that stretch reads QVIHHAKACC…KTTAVEIDYD (62 aa). At Tyr-559 the chain carries Phosphotyrosine. Residues Ser-561 and Ser-568 each carry the phosphoserine modification. An SH2-binding; to LCP2 motif is present at residues 584–587; that stretch reads YDDV. Disordered stretches follow at residues 589 to 635 and 649 to 728; these read EQDA…DEKT and KDDR…EKEE. The span at 610–626 shows a compositional bias: acidic residues; it reads TDDEIYDGIEEEDDDDG. Residues 615–618 carry the SH2-binding; to FYN motif; that stretch reads YDGI. The segment covering 649–664 has biased composition (basic and acidic residues); sequence KDDRKKSIREKPKVSE. The segment covering 668 to 677 has biased composition (polar residues); sequence NEGSSLPSQH. Residues 682–692 show a composition bias toward acidic residues; that stretch reads VGEEVYDDVDA. Phosphotyrosine is present on Tyr-687. The Nuclear localization signal motif lies at 710–736; sequence RAKTEEKDPKKLKKQEKEEKDLRKKFK. A compositionally biased stretch (basic and acidic residues) spans 711-728; sequence AKTEEKDPKKLKKQEKEE. The 69-residue stretch at 736-804 folds into the SH3 2 domain; the sequence is KYDGEIRVLY…LRSYLVDNDG (69 aa).

In terms of assembly, part of a complex consisting of SKAP2, FYB1 and PTPNS1. Part of a complex consisting of SKAP2, FYB1 and PIRB. Part of a complex consisting of SKAP1, FYB1 and CLNK. Interacts with CLNK (via its SH2 domain); this interaction allows SKAP1 and FYB1 to recruit FYN to the complex, thus promoting the phosphorylation of CLNK by FYN. Interacts with FYN. Interacts with LCP2. Interacts with SKAP1. Interacts with SKAP2. Interacts with FASLG. Interacts with EVL. Interacts with TMEM47. Interacts with LCK. Post-translationally, T-cell receptor ligation leads to increased tyrosine phosphorylation. Expressed in hematopoietic tissues such as myeloid and T-cells, spleen and thymus. Not expressed in B-cells, nor in non-lymphoid tissues. FYB-130 is preferentially expressed in mature T-cells compared to FYB-120, whereas thymocytes showed a greater relative amount of FYB-120. Expressed in podocytes.

The protein localises to the cytoplasm. The protein resides in the nucleus. Its subcellular location is the cell junction. In terms of biological role, acts as an adapter protein of the FYN and LCP2 signaling cascades in T-cells. May play a role in linking T-cell signaling to remodeling of the actin cytoskeleton. Modulates the expression of IL2. Involved in platelet activation. Prevents the degradation of SKAP1 and SKAP2. May be involved in high affinity immunoglobulin epsilon receptor signaling in mast cells. This is FYN-binding protein 1 (Fyb1) from Mus musculus (Mouse).